We begin with the raw amino-acid sequence, 117 residues long: Small ribosomal subunit protein eS25 (117 aa).

A disordered region spans residues 1-34 (MPPKKDPKGGKAPPSKKKEGSGGGKAKKKKWSKG). Residues 25-34 (KAKKKKWSKG) show a composition bias toward basic residues.

Belongs to the eukaryotic ribosomal protein eS25 family.

The polypeptide is Small ribosomal subunit protein eS25 (rps-25) (Caenorhabditis elegans).